The sequence spans 295 residues: MSLFKGSGVALITPFKDEESVDFETLGRLVDFHLEHKTDAIIVCGTTGEPSTMPDDEHLEVIRFVIDRVAGRKPVIAGVGSNHTKHAVYLSKKAQELGADGLLHVTPYYNKTTQKGLIEHFKEINDAVSIPIIVYNVPSRTGLNVLPETMKELAKLPNVKAIKEASGNITQVAEIAMLCPEIDIYSGNDDQIVPILSVGGIGVISVLANILPDETHDIVEYFLNGEIEKARELQLKLLPIIKALFIEVNPIPVKEAMNMMGFNVGKPRLPLTTMTEKNREILKKALVDYGISVKE.

Pyruvate is bound at residue Thr47. Catalysis depends on Tyr135, which acts as the Proton donor/acceptor. Catalysis depends on Lys163, which acts as the Schiff-base intermediate with substrate. Ile204 lines the pyruvate pocket.

It belongs to the DapA family. Homotetramer; dimer of dimers.

The protein localises to the cytoplasm. The enzyme catalyses L-aspartate 4-semialdehyde + pyruvate = (2S,4S)-4-hydroxy-2,3,4,5-tetrahydrodipicolinate + H2O + H(+). It participates in amino-acid biosynthesis; L-lysine biosynthesis via DAP pathway; (S)-tetrahydrodipicolinate from L-aspartate: step 3/4. Its function is as follows. Catalyzes the condensation of (S)-aspartate-beta-semialdehyde [(S)-ASA] and pyruvate to 4-hydroxy-tetrahydrodipicolinate (HTPA). The protein is 4-hydroxy-tetrahydrodipicolinate synthase of Caldicellulosiruptor bescii (strain ATCC BAA-1888 / DSM 6725 / KCTC 15123 / Z-1320) (Anaerocellum thermophilum).